The chain runs to 58 residues: ATP synthase F(0) complex subunit k, mitochondrial (58 aa).

An N6-acetyllysine mark is found at K16 and K17. A helical membrane pass occupies residues 23–45; the sequence is TLTGRMNCVLATYGGIALLVLYF.

In terms of assembly, component of the ATP synthase complex composed at least of ATP5F1A/subunit alpha, ATP5F1B/subunit beta, ATP5MC1/subunit c (homooctomer), MT-ATP6/subunit a, MT-ATP8/subunit 8, ATP5ME/subunit e, ATP5MF/subunit f, ATP5MG/subunit g, ATP5MK/subunit k, ATP5MJ/subunit j, ATP5F1C/subunit gamma, ATP5F1D/subunit delta, ATP5F1E/subunit epsilon, ATP5PF/subunit F6, ATP5PB/subunit b, ATP5PD/subunit d, ATP5PO/subunit OSCP. ATP synthase complex consists of a soluble F(1) head domain (subunits alpha(3) and beta(3)) - the catalytic core - and a membrane F(0) domain - the membrane proton channel (subunits c, a, 8, e, f, g, k and j). These two domains are linked by a central stalk (subunits gamma, delta, and epsilon) rotating inside the F1 region and a stationary peripheral stalk (subunits F6, b, d, and OSCP). The ATP synthase complex/complex V exists as a monomeric and a dimeric supercomplex that helps shape mitochondrial cristae to optimize proton flow. As to expression, ubiquitous. Highly expressed in skeletal and cardiac muscle. Moderately expressed in brain, thymus, stomach and testis. Lowest expression levels were detected in lung, liver, kidney, adrenal gland, spleen, small intestine and adipose tissue. In streptozotocin-induced diabetes, the insulin-sensitive tissues skeletal and cardiac muscle were down-regulated.

It localises to the mitochondrion membrane. Subunit k, of the mitochondrial membrane ATP synthase complex (F(1)F(0) ATP synthase or Complex V) that produces ATP from ADP in the presence of a proton gradient across the membrane which is generated by electron transport complexes of the respiratory chain. ATP synthase complex consist of a soluble F(1) head domain - the catalytic core - and a membrane F(1) domain - the membrane proton channel. These two domains are linked by a central stalk rotating inside the F(1) region and a stationary peripheral stalk. During catalysis, ATP synthesis in the catalytic domain of F(1) is coupled via a rotary mechanism of the central stalk subunits to proton translocation. In vivo, can only synthesize ATP although its ATP hydrolase activity can be activated artificially in vitro. Part of the complex F(0) domain. Required for dimerization of the ATP synthase complex and as such regulates ATP synthesis in the mitochondria. The chain is ATP synthase F(0) complex subunit k, mitochondrial (Atp5mk) from Rattus norvegicus (Rat).